We begin with the raw amino-acid sequence, 513 residues long: ETS translocation variant 3 (513 aa).

Residues 35–116 (IQLWHFILEL…KGKRFTYKFN (82 aa)) constitute a DNA-binding region (ETS). The interval 138–202 (QSAPPVPTAS…DLEDGSASDW (65 aa)) is disordered. A phosphoserine mark is found at Ser139, Ser159, and Ser315. Residues 333-513 (QMHPEEPSQF…ATTATAAADA (181 aa)) form a disordered region. Basic and acidic residues-rich tracts occupy residues 357 to 366 (ERVESREEAV), 380 to 392 (IKVEPATEKDPDS), and 399 to 419 (GKEEQTQEVDSMRSRTIEEGK). A Glycyl lysine isopeptide (Lys-Gly) (interchain with G-Cter in SUMO2) cross-link involves residue Lys381. Lys388 bears the N6-acetyllysine; alternate mark. Residue Lys388 forms a Glycyl lysine isopeptide (Lys-Gly) (interchain with G-Cter in SUMO2); alternate linkage. Residues 430-439 (WPSVSISTPS) are compositionally biased toward polar residues. Acidic residues predominate over residues 441–450 (EPLEGTEDSE). 2 stretches are compositionally biased toward basic and acidic residues: residues 451-466 (DRSVREPGVPEKKEDA) and 477-489 (RWNDDPEARELNK). Over residues 504–513 (ATTATAAADA) the composition is skewed to low complexity.

It belongs to the ETS family.

Its subcellular location is the nucleus. Its function is as follows. Transcriptional repressor that contribute to growth arrest during terminal macrophage differentiation by repressing target genes involved in Ras-dependent proliferation. Represses MMP1 promoter activity. The protein is ETS translocation variant 3 (Etv3) of Mus musculus (Mouse).